Consider the following 550-residue polypeptide: Hydroxylamine reductase (550 aa).

The [2Fe-2S] cluster site is built by cysteine 3, cysteine 6, cysteine 18, and cysteine 25. Hybrid [4Fe-2O-2S] cluster is bound by residues histidine 249, glutamate 273, cysteine 317, cysteine 405, cysteine 433, cysteine 458, glutamate 492, and lysine 494. At cysteine 405 the chain carries Cysteine persulfide.

The protein belongs to the HCP family. [2Fe-2S] cluster is required as a cofactor. Hybrid [4Fe-2O-2S] cluster serves as cofactor.

The protein localises to the cytoplasm. The enzyme catalyses A + NH4(+) + H2O = hydroxylamine + AH2 + H(+). Functionally, catalyzes the reduction of hydroxylamine to form NH(3) and H(2)O. The protein is Hydroxylamine reductase of Salmonella schwarzengrund (strain CVM19633).